We begin with the raw amino-acid sequence, 310 residues long: Nucleotide-binding protein MAP_1147 (310 aa).

Residue 30–37 (GLSGAGRG) participates in ATP binding. A GTP-binding site is contributed by 81-84 (DVRS).

It belongs to the RapZ-like family.

Its function is as follows. Displays ATPase and GTPase activities. This is Nucleotide-binding protein MAP_1147 from Mycolicibacterium paratuberculosis (strain ATCC BAA-968 / K-10) (Mycobacterium paratuberculosis).